A 333-amino-acid polypeptide reads, in one-letter code: NADH dehydrogenase (ubiquinone) complex I, assembly factor 6 (333 aa).

A mitochondrion-targeting transit peptide spans 1–44 (MAASTLGSAWGPLRLGVPGLCRRRPPRGLWARARRLSEPVASGR).

It belongs to the NDUFAF6 family.

It localises to the mitochondrion inner membrane. Functionally, involved in the assembly of mitochondrial NADH:ubiquinone oxidoreductase complex (complex I) at early stages. May play a role in the biogenesis of complex I subunit MT-ND1. The protein is NADH dehydrogenase (ubiquinone) complex I, assembly factor 6 (NDUFAF6) of Bos taurus (Bovine).